We begin with the raw amino-acid sequence, 139 residues long: D-ribose pyranase (139 aa).

Residue His20 is the Proton donor of the active site. Residues Asp28, His106, and 128–130 (YAN) each bind substrate.

The protein belongs to the RbsD / FucU family. RbsD subfamily. In terms of assembly, homodecamer.

Its subcellular location is the cytoplasm. The catalysed reaction is beta-D-ribopyranose = beta-D-ribofuranose. Its pathway is carbohydrate metabolism; D-ribose degradation; D-ribose 5-phosphate from beta-D-ribopyranose: step 1/2. In terms of biological role, catalyzes the interconversion of beta-pyran and beta-furan forms of D-ribose. This chain is D-ribose pyranase, found in Proteus mirabilis (strain HI4320).